The primary structure comprises 436 residues: GTPase Der (436 aa).

EngA-type G domains lie at 4–167 (PTVA…PVEE) and 175–351 (IRFS…ESQN). Residues 10 to 17 (GRPNVGKS), 57 to 61 (DTGGI), 119 to 122 (NKVD), 181 to 188 (GRPNVGKS), 229 to 233 (DTAGM), and 294 to 297 (NKWD) each bind GTP. One can recognise a KH-like domain in the interval 352 to 436 (KRIPSAVLND…PIHLIARKRK (85 aa)).

Belongs to the TRAFAC class TrmE-Era-EngA-EngB-Septin-like GTPase superfamily. EngA (Der) GTPase family. As to quaternary structure, associates with the 50S ribosomal subunit.

In terms of biological role, GTPase that plays an essential role in the late steps of ribosome biogenesis. The polypeptide is GTPase Der (Streptococcus pyogenes serotype M5 (strain Manfredo)).